The chain runs to 31 residues: Superoxide dismutase [Cu-Zn] (31 aa).

Belongs to the Cu-Zn superoxide dismutase family. It depends on Cu cation as a cofactor. Zn(2+) serves as cofactor.

It localises to the cytoplasm. The catalysed reaction is 2 superoxide + 2 H(+) = H2O2 + O2. Its function is as follows. Destroys radicals which are normally produced within the cells and which are toxic to biological systems. This chain is Superoxide dismutase [Cu-Zn], found in Striga hermonthica (Purple witchweed).